The primary structure comprises 210 residues: Large ribosomal subunit protein uL4 (210 aa).

Belongs to the universal ribosomal protein uL4 family. In terms of assembly, part of the 50S ribosomal subunit.

One of the primary rRNA binding proteins, this protein initially binds near the 5'-end of the 23S rRNA. It is important during the early stages of 50S assembly. It makes multiple contacts with different domains of the 23S rRNA in the assembled 50S subunit and ribosome. Its function is as follows. Forms part of the polypeptide exit tunnel. This Orientia tsutsugamushi (strain Boryong) (Rickettsia tsutsugamushi) protein is Large ribosomal subunit protein uL4.